A 127-amino-acid chain; its full sequence is Large ribosomal subunit protein uL22 (127 aa).

This sequence belongs to the universal ribosomal protein uL22 family. In terms of assembly, part of the 50S ribosomal subunit.

Its function is as follows. This protein binds specifically to 23S rRNA; its binding is stimulated by other ribosomal proteins, e.g. L4, L17, and L20. It is important during the early stages of 50S assembly. It makes multiple contacts with different domains of the 23S rRNA in the assembled 50S subunit and ribosome. The globular domain of the protein is located near the polypeptide exit tunnel on the outside of the subunit, while an extended beta-hairpin is found that lines the wall of the exit tunnel in the center of the 70S ribosome. This is Large ribosomal subunit protein uL22 from Methylorubrum populi (strain ATCC BAA-705 / NCIMB 13946 / BJ001) (Methylobacterium populi).